The chain runs to 230 residues: Cell division ATP-binding protein FtsE (230 aa).

Residues 4-229 (IEMRDVVKKY…DESKGEYGYD (226 aa)) form the ABC transporter domain. 37-44 (GPSGAGKS) serves as a coordination point for ATP.

This sequence belongs to the ABC transporter superfamily. Homodimer. Interacts with FtsX; forms a membrane-associated complex. Interacts with pcsB.

It is found in the cell membrane. The catalysed reaction is ATP + H2O = ADP + phosphate + H(+). Functionally, part of the ABC transporter FtsEX involved in cellular division. Has ATPase activity. Essential for cell division and viability. The chain is Cell division ATP-binding protein FtsE from Streptococcus pneumoniae serotype 2 (strain D39 / NCTC 7466).